Here is an 853-residue protein sequence, read N- to C-terminus: Deubiquitinase otu (853 aa).

Residues M1–Y20 form a disordered region. Residues L29–V150 enclose the OTU domain. Residue D37 is part of the active site. The Nucleophile role is filled by S40. Residue H143 is part of the active site. One can recognise a Tudor domain in the interval N336–P396. The segment at P396–H853 is LC domain. Residues Q460–P470 are compositionally biased toward basic and acidic residues. Disordered regions lie at residues Q460 to M531, A681 to S704, G732 to G794, and N817 to H853. Residues S499–S517 show a composition bias toward low complexity. Positions N747–S758 are enriched in polar residues. Over residues L769–I778 the composition is skewed to pro residues. Composition is skewed to low complexity over residues A783–G794 and P820–S838.

As to quaternary structure, self aggregates, forming amyloid-like fibrillar helical structures; protein aggregation is mediated by the C-terminal LC domain, is enhanced by RNA binding and is essential for deubiquitinase activity. Interacts (via OTU domain) with bam (via C-terminus); the interaction enhances otu aggregation and deubiquitinase activity. Together with bam interacts with CycA/cyclin-A; the interaction stabilizes CycA by promoting its deubiquitination. Together with bam interacts with Traf6. Interacts with Hrb27C; the interaction is RNA-independent. Associates (via N-terminus) with mRNP complexes; the interaction is weak. In terms of tissue distribution, expressed at high levels in the ovary, at low levels in the brain and fat body, and at moderate levels in the gut.

It is found in the cytoplasm. It localises to the cell cortex. The protein resides in the perinuclear region. Activated by protein aggregation, which is mediated by the LC domain and enhanced by RNA binding. Its function is as follows. Catalytic component of a deubiquitinase complex consisting of bam and otu. The complex deubiquitinates K63-linked polyubiquitinated proteins; this antagonizes the ubiquitination activity of Traf6 and regulates the IMD immune signaling pathway. Otu-bam deubiquitinase activity is regulated by Traf6 dependent immune signaling regulation of bam expression levels; this forms a feedback loop that regulates the IMD immune signaling pathway and balances gut immune activity during aging. The complex deubiquitinates and stabilizes CycA/cyclin-A to regulate CycA-dependent differentiation. Involved in grk mRNA localization to the dorsal anterior region of the oocyte required for dorsal-ventral axis determination; may function as a ribonuclear protein complex together with sqd and Hrb27C. May regulate actin cytoskeleton organization in differentiating cystocytes during fusome maturation; required for efficient nurse cell cytoplasmic dumping during oogenesis. Essential for female fertility; involved in germ cell proliferation and germ cell differentiation. Functionally, involved in the early stages of germ cell proliferation and differentiation during oogenesis. Required for polytene chromosome dispersal in nurse cells during oogenesis. Involved in the later stages of germ cell proliferation and differentiation during oogenesis. This Drosophila melanogaster (Fruit fly) protein is Deubiquitinase otu.